A 1580-amino-acid polypeptide reads, in one-letter code: Endoribonuclease Dicer homolog 3 (1580 aa).

Positions 1–12 (MHSSLEPEKMEE) are enriched in basic and acidic residues. The segment at 1–22 (MHSSLEPEKMEEGGGSNSLKRK) is disordered. One can recognise a Helicase ATP-binding domain in the interval 51–223 (VYEVAKNRNI…SPSNYAAQVS (173 aa)). ATP is bound at residue 64–71 (LGTGIDKS). A DECH box motif is present at residues 170–173 (DECH). The Helicase C-terminal domain occupies 394–562 (KLKELFHLLD…SCPPPVKNGH (169 aa)). The span at 581–597 (EEAASTQTMSDPPSRNE) shows a compositional bias: polar residues. Disordered regions lie at residues 581–601 (EEAA…QLPP) and 613–638 (QSNG…KKRK). The span at 622 to 633 (SSKSKSSSSAAG) shows a compositional bias: low complexity. One can recognise a PAZ domain in the interval 836–960 (NLIHFANASS…LPPELLARID (125 aa)). RNase III domains lie at 985–1157 (ASQL…VSGG) and 1198–1340 (LIEL…IDTR). Positions 1234, 1326, and 1329 each coordinate Mg(2+).

It belongs to the helicase family. Dicer subfamily. In terms of assembly, interacts with DRB2 and DRB5. Mg(2+) is required as a cofactor. Requires Mn(2+) as cofactor.

It localises to the nucleus. Its subcellular location is the nucleolus. Functionally, ribonuclease (RNase) III involved in RNA-mediated post-transcriptional gene silencing (PTGS). Involved in the processing of repeat-associated small interfering RNAs (ra-siRNAs, derived from heterochromatin and DNA repeats such as transposons) by cleaving small dsRNAs into 24 nucleotide ra-siRNAs. Plays a role in antiviral RNA silencing. Involved in the production of viral siRNAs derived from the cabbage leaf curl virus (CaLCuV) and tobacco rattle virus (TRV). Targeted by the viral silencing suppressor (VSR) protein 2b of the cucumber mosaic virus (CMV) that inactivates DCL3 function in RNA silencing. Acts redundantly with DICER-LIKE 1 (DCL1) to promote flowering via repression of FLOWERING LOCUS C (FLC). Does not seem to be involved in microRNAs (miRNAs) processing. The chain is Endoribonuclease Dicer homolog 3 (DCL3) from Arabidopsis thaliana (Mouse-ear cress).